The sequence spans 433 residues: Inositol hexakisphosphate kinase 1 (433 aa).

The disordered stretch occupies residues 100 to 160; the sequence is ETVEQDDTPE…SPKVELHSHS (61 aa). Positions 113-123 are enriched in basic residues; sequence PRRKHSRRSLH. A compositionally biased stretch (polar residues) spans 139–149; the sequence is SFETSESSQET. Basic and acidic residues predominate over residues 150–160; sequence KSPKVELHSHS. Phosphoserine is present on Ser-151. A substrate-binding site is contributed by 220 to 228; the sequence is PCVLDLKMG. Positions 362-383 are disordered; sequence PLCGPSTSPSNTSLEAGPSSPP. The span at 366 to 375 shows a compositional bias: polar residues; that stretch reads PSTSPSNTSL.

It belongs to the inositol phosphokinase (IPK) family.

It is found in the cytoplasm. The protein localises to the nucleus. The enzyme catalyses 1D-myo-inositol hexakisphosphate + ATP = 5-diphospho-1D-myo-inositol 1,2,3,4,6-pentakisphosphate + ADP. It catalyses the reaction 1-diphospho-1D-myo-inositol 2,3,4,5,6-pentakisphosphate + ATP + H(+) = 1,5-bis(diphospho)-1D-myo-inositol 2,3,4,6-tetrakisphosphate + ADP. Functionally, converts inositol hexakisphosphate (InsP6) to diphosphoinositol pentakisphosphate (InsP7/PP-InsP5). Converts 1,3,4,5,6-pentakisphosphate (InsP5) to PP-InsP4. In Rattus norvegicus (Rat), this protein is Inositol hexakisphosphate kinase 1 (Ip6k1).